Consider the following 594-residue polypeptide: Actin-histidine N-methyltransferase (594 aa).

Residues 1–22 (MGKKSRVKTQKSGTGATATVSP) are disordered. Positions 10 to 20 (QKSGTGATATV) are enriched in polar residues. Residues Arg-75, 104–106 (EGF), Arg-254, 275–279 (DMCNH), and 325–327 (SGF) contribute to the S-adenosyl-L-methionine site. The SET domain occupies 94-314 (EGFEMVNFKE…AGEQIYIFYG (221 aa)). Residue Ser-513 is modified to Phosphoserine. Residues 549–594 (ENGLVNGENSIPNGTRSENESLNQESKRAVEDAKGSSSDSTAGVKE) form a disordered region. Positions 555 to 572 (GENSIPNGTRSENESLNQ) are enriched in polar residues. Over residues 573-582 (ESKRAVEDAK) the composition is skewed to basic and acidic residues. Positions 583–594 (GSSSDSTAGVKE) are enriched in polar residues.

The protein belongs to the class V-like SAM-binding methyltransferase superfamily. SETD3 actin-histidine methyltransferase family. As to quaternary structure, interacts with MYOD1. Phosphorylated by GSK3B, which is required for recognition by the SCF(FBXW7) complex and subsequent degradation. Post-translationally, ubiquitinated by the SCF(FBXW7) complex following phosphorylation by GSK3B, leading to its degradation by the proteasome.

The protein localises to the cytoplasm. It localises to the nucleus. The enzyme catalyses L-histidyl-[protein] + S-adenosyl-L-methionine = N(tele)-methyl-L-histidyl-[protein] + S-adenosyl-L-homocysteine + H(+). Its function is as follows. Protein-histidine N-methyltransferase that specifically mediates 3-methylhistidine (tele-methylhistidine) methylation of actin at 'His-73'. Histidine methylation of actin is required for smooth muscle contraction of the laboring uterus during delivery. Does not have protein-lysine N-methyltransferase activity and probably only catalyzes histidine methylation of actin. The protein is Actin-histidine N-methyltransferase of Homo sapiens (Human).